The chain runs to 178 residues: Nicotinamide-nucleotide adenylyltransferase (178 aa).

The protein belongs to the archaeal NMN adenylyltransferase family.

The protein localises to the cytoplasm. The enzyme catalyses beta-nicotinamide D-ribonucleotide + ATP + H(+) = diphosphate + NAD(+). The protein operates within cofactor biosynthesis; NAD(+) biosynthesis; NAD(+) from nicotinamide D-ribonucleotide: step 1/1. In Pyrobaculum arsenaticum (strain DSM 13514 / JCM 11321 / PZ6), this protein is Nicotinamide-nucleotide adenylyltransferase.